Consider the following 34-residue polypeptide: Somatostatin (34 aa).

Residues 1–20 form a disordered region; sequence AVERPRQDGQVHEPPGRERK. Residues C23 and C34 are joined by a disulfide bond.

It belongs to the somatostatin family.

It localises to the secreted. Somatostatin inhibits the release of somatotropin. This Myxine glutinosa (Atlantic hagfish) protein is Somatostatin (sst).